The following is a 263-amino-acid chain: 3-methyl-2-oxobutanoate hydroxymethyltransferase (263 aa).

The Mg(2+) site is built by Asp-44 and Asp-83. 3-methyl-2-oxobutanoate-binding positions include 44–45 (DS), Asp-83, and Lys-113. Glu-115 contacts Mg(2+). The active-site Proton acceptor is the Glu-183.

The protein belongs to the PanB family. In terms of assembly, homodecamer; pentamer of dimers. Mg(2+) serves as cofactor.

Its subcellular location is the cytoplasm. It catalyses the reaction 3-methyl-2-oxobutanoate + (6R)-5,10-methylene-5,6,7,8-tetrahydrofolate + H2O = 2-dehydropantoate + (6S)-5,6,7,8-tetrahydrofolate. The protein operates within cofactor biosynthesis; (R)-pantothenate biosynthesis; (R)-pantoate from 3-methyl-2-oxobutanoate: step 1/2. Functionally, catalyzes the reversible reaction in which hydroxymethyl group from 5,10-methylenetetrahydrofolate is transferred onto alpha-ketoisovalerate to form ketopantoate. The protein is 3-methyl-2-oxobutanoate hydroxymethyltransferase of Trichodesmium erythraeum (strain IMS101).